Reading from the N-terminus, the 162-residue chain is Ribosome maturation factor RimP (162 aa).

This sequence belongs to the RimP family.

Its subcellular location is the cytoplasm. In terms of biological role, required for maturation of 30S ribosomal subunits. This is Ribosome maturation factor RimP from Syntrophotalea carbinolica (strain DSM 2380 / NBRC 103641 / GraBd1) (Pelobacter carbinolicus).